Here is a 377-residue protein sequence, read N- to C-terminus: uncharacterized protein (377 aa).

A run of 10 helical transmembrane segments spans residues 4 to 24 (LLTP…LLGT), 41 to 61 (ASFG…FPIT), 85 to 105 (IAAL…FLFG), 134 to 154 (FHAM…IATV), 159 to 179 (VYVH…PFLL), 192 to 212 (GAVG…IALA), 278 to 298 (VFGI…AGFV), 301 to 321 (GVGY…DLVV), 327 to 347 (IASV…AIGL), and 356 to 376 (LCFF…PVLK).

It to R.meliloti MosC.

It is found in the cell membrane. Its function is as follows. Could be involved in a transport system. This is an uncharacterized protein from Sinorhizobium fredii (strain NBRC 101917 / NGR234).